Reading from the N-terminus, the 307-residue chain is Bifunctional protein FolD 3 (307 aa).

NADP(+) contacts are provided by residues Gly169–Ser171, Ser194, and Ile235.

It belongs to the tetrahydrofolate dehydrogenase/cyclohydrolase family. In terms of assembly, homodimer.

It catalyses the reaction (6R)-5,10-methylene-5,6,7,8-tetrahydrofolate + NADP(+) = (6R)-5,10-methenyltetrahydrofolate + NADPH. The catalysed reaction is (6R)-5,10-methenyltetrahydrofolate + H2O = (6R)-10-formyltetrahydrofolate + H(+). The protein operates within one-carbon metabolism; tetrahydrofolate interconversion. Catalyzes the oxidation of 5,10-methylenetetrahydrofolate to 5,10-methenyltetrahydrofolate and then the hydrolysis of 5,10-methenyltetrahydrofolate to 10-formyltetrahydrofolate. The protein is Bifunctional protein FolD 3 of Ectopseudomonas mendocina (strain ymp) (Pseudomonas mendocina).